Consider the following 122-residue polypeptide: uncharacterized protein (122 aa).

The span at 1–15 shows a compositional bias: basic and acidic residues; it reads MAEPGGRGDYRKDGR. The tract at residues 1–49 is disordered; that stretch reads MAEPGGRGDYRKDGRLPSLSRSPLSTTLGTSPACGLEIPPTSGARPDGS. Residues 16-32 are compositionally biased toward low complexity; it reads LPSLSRSPLSTTLGTSP.

This is an uncharacterized protein from Homo sapiens (Human).